The primary structure comprises 54 residues: Soricidin (54 aa).

Intrachain disulfides connect Cys2-Cys23, Cys6-Cys27, and Cys9-Cys41.

Belongs to the opioid neuropeptide precursor family. As to quaternary structure, member of a multiprotein complex. Salivary gland.

The protein localises to the secreted. Paralytic toxin that immobilizes a mealworm for 7 days. Inhibits the transient receptor potential cation channel subfamily V member 6 (TRPV6). In Blarina brevicauda (Northern short-tailed shrew), this protein is Soricidin.